Here is a 412-residue protein sequence, read N- to C-terminus: NFATC2-interacting protein (412 aa).

Residues 1 to 38 (MAEPLRGRGPRSRGGRGARRARGARGRCPRARQSPARL) form a disordered region. Residues 8-30 (RGPRSRGGRGARRARGARGRCPR) are compositionally biased toward basic residues. Phosphoserine occurs at positions 49, 51, 79, 81, and 83. The segment at 58–115 (VADPVEVPVARLPAPAKPEQDSDSDSEGAAEGPAGAPRTLVRRRRRRLLDPGEAPVVP) is disordered. Positions 86-96 (AAEGPAGAPRT) are enriched in low complexity. Serine 118 carries the phosphoserine modification. Lysine 120 is covalently cross-linked (Glycyl lysine isopeptide (Lys-Gly) (interchain with G-Cter in SUMO2)). The interval 136–206 (KLCPSEPEDE…SSRNKSRKHT (71 aa)) is disordered. Residues 168-227 (RKKLRKKCEKEEKKMEEFPDQDISPLPQPSSRNKSRKHTEALQKLREVNKRLQDLRSCLS) adopt a coiled-coil conformation. The segment covering 175 to 184 (CEKEEKKMEE) has biased composition (basic and acidic residues). Phosphoserine occurs at positions 191, 197, and 307. A phosphothreonine mark is found at threonine 309 and threonine 311. Residues 341–412 (LRLRVQGKEK…ESGDLIEVWG (72 aa)) form the Ubiquitin-like domain. Residues serine 362 and serine 383 each carry the phosphoserine modification.

In terms of assembly, interacts with NFATC2, TRAF1, TRAF2 and PRMT1. Interacts with UBE2I/UBC9. In terms of processing, methylation at the N-terminus by PRMT1 modulates interaction with the NFAT complex and results in augmented cytokine production. As to expression, highest level detected in spleen, thymus and testis.

It localises to the nucleus. The protein resides in the cytoplasm. In T-helper 2 (Th2) cells, regulates the magnitude of NFAT-driven transcription of a specific subset of cytokine genes, including IL3, IL4, IL5 and IL13, but not IL2. Recruits PRMT1 to the IL4 promoter; this leads to enhancement of histone H4 'Arg-3'-methylation and facilitates subsequent histone acetylation at the IL4 locus, thus promotes robust cytokine expression. Down-regulates formation of poly-SUMO chains by UBE2I/UBC9. The polypeptide is NFATC2-interacting protein (Nfatc2ip) (Mus musculus (Mouse)).